We begin with the raw amino-acid sequence, 309 residues long: 4-hydroxy-tetrahydrodipicolinate synthase (309 aa).

Threonine 51 provides a ligand contact to pyruvate. The active-site Proton donor/acceptor is tyrosine 140. Lysine 168 functions as the Schiff-base intermediate with substrate in the catalytic mechanism. Isoleucine 209 contacts pyruvate.

It belongs to the DapA family. As to quaternary structure, homotetramer; dimer of dimers.

It is found in the cytoplasm. The catalysed reaction is L-aspartate 4-semialdehyde + pyruvate = (2S,4S)-4-hydroxy-2,3,4,5-tetrahydrodipicolinate + H2O + H(+). It participates in amino-acid biosynthesis; L-lysine biosynthesis via DAP pathway; (S)-tetrahydrodipicolinate from L-aspartate: step 3/4. Its function is as follows. Catalyzes the condensation of (S)-aspartate-beta-semialdehyde [(S)-ASA] and pyruvate to 4-hydroxy-tetrahydrodipicolinate (HTPA). The chain is 4-hydroxy-tetrahydrodipicolinate synthase from Streptococcus uberis (strain ATCC BAA-854 / 0140J).